The sequence spans 378 residues: Circumsporozoite protein (378 aa).

The N-terminal stretch at 1–22 (MKNFILLAVSSILLVDLFPTHC) is a signal peptide. Positions 51 to 295 (HVGQSASRGR…NNEGANAPNE (245 aa)) are disordered. The segment covering 72–100 (DAKKKKDGKKAEPKNPRENKLKQPGDRAD) has biased composition (basic and acidic residues). Residues 80–88 (KKAEPKNPR) are required for the binding to heparan sulfate proteoglycans (HSPGs) on the surface of host hepatocytes. The segment at 91–95 (KLKQP) is region I; contains the proteolytic cleavage site. 19 consecutive repeat copies span residues 95–103 (PGDRADGQP), 104–112 (AGDRADGQP), 113–121 (AGDRADGQP), 122–130 (AGDRAAGQP), 131–139 (AGDRADGQP), 140–148 (AGDRADGQP), 149–157 (AGDRADGQP), 158–166 (AGDRADGQP), 167–175 (AGDRAAGQP), 176–184 (AGDRAAGQP), 185–193 (AGDRADGQP), 194–202 (AGDRAAGQP), 203–211 (AGDRADGQP), 212–220 (AGDRAAGQP), 221–229 (AGDRADGQP), 230–238 (AGDRAAGQP), 239–247 (AGDRAAGQP), 248–256 (AGDRAAGQP), and 257–265 (AGDRAAGQP). Positions 95–265 (PGDRADGQPA…PAGDRAAGQP (171 aa)) are 19 X 9 AA tandem repeats of [PA]-G-D-R-A-[DA]-G-Q-P. Residues 266-284 (AGNGAGGQAAGGNAGGGQG) are compositionally biased toward gly residues. A compositionally biased stretch (low complexity) spans 285 to 295 (QNNEGANAPNE). A TSP type-1 domain is found at 304–356 (KVRATVGTEWTPCSVTCGVGVRVRRRVNAANKKPEDLTLNDLETDVCTMDKCA). 2 disulfide bridges follow: Cys-316-Cys-350 and Cys-320-Cys-355. An O-linked (Fuc) threonine glycan is attached at Thr-319. Cys-355 is lipidated: GPI-anchor amidated cysteine. A propeptide spans 356-378 (AGIFNVVSNSLGLVILLVLALFN) (removed in mature form).

The protein belongs to the plasmodium circumsporozoite protein family. During host cell invasion, proteolytically cleaved at the cell membrane in the region I by a papain-like cysteine protease of parasite origin. Cleavage is triggered by the sporozoite contact with highly sulfated heparan sulfate proteoglycans (HSPGs) present on the host hepatocyte cell surface. Cleavage exposes the TSP type-1 (TSR) domain and is required for productive invasion of host hepatocytes but not for adhesion to the host cell membrane. Cleavage is dispensable for sporozoite development in the oocyst, motility and for traversal of host and vector cells. In terms of processing, O-glycosylated; maybe by POFUT2.

Its subcellular location is the cell membrane. The protein localises to the cytoplasm. In terms of biological role, essential sporozoite protein. In the mosquito vector, required for sporozoite development in the oocyst, migration through the vector hemolymph and entry into the vector salivary glands. In the vertebrate host, required for sporozoite migration through the host dermis and infection of host hepatocytes. Binds to highly sulfated heparan sulfate proteoglycans (HSPGs) on the surface of host hepatocytes. Functionally, in the vertebrate host, binds to highly sulfated heparan sulfate proteoglycans (HSPGs) on the surface of host hepatocytes and is required for sporozoite invasion of the host hepatocytes. The chain is Circumsporozoite protein from Plasmodium vivax (strain Belem).